The following is a 765-amino-acid chain: Zinc metalloproteinase nas-37 (765 aa).

Positions 1–22 are cleaved as a signal peptide; it reads MKSQACLKVCLALIGLVSIVST. Positions 23-114 are excised as a propeptide; the sequence is AYIANDVVSD…SESNSPRSRR (92 aa). The 194-residue stretch at 115–308 folds into the Peptidase M12A domain; the sequence is QAHPDPRNFW…AKMINTRYCS (194 aa). N-linked (GlcNAc...) asparagine glycosylation occurs at Asn-126. 6 cysteine pairs are disulfide-bonded: Cys-156–Cys-307, Cys-177–Cys-196, Cys-311–Cys-331, Cys-333–Cys-342, Cys-350–Cys-374, and Cys-400–Cys-420. Residue His-204 coordinates Zn(2+). Glu-205 is an active-site residue. The Zn(2+) site is built by His-208 and His-214. The EGF-like domain occupies 303 to 343; it reads NTRYCSNVCQRSLPCLNEGYTDPNNCGRCRCPSGYGGTYCE. The CUB domain maps to 350-458; it reads CGGSLTASSS…RGFTLKYRAI (109 aa). A disordered region spans residues 513–573; sequence KYSSEELYDP…TRPTPTTTVA (61 aa). Low complexity-rich tracts occupy residues 526–545 and 562–573; these read LSPSSSSASPALLLPSDASP and ALTRPTPTTTVA. Residues 576-627 enclose the TSP type-1 domain; it reads TASWSAWGEWSACSQPCGGCGTKTRVRACYGGNQVCPGSNLDRESCNAHACA. Intrachain disulfides connect Cys-588-Cys-621, Cys-592-Cys-626, and Cys-604-Cys-611.

Requires Zn(2+) as cofactor. In terms of tissue distribution, expressed in hypodermal cells. Not expressed in the seam cells in L1 to L3 larvae, but it is present in seam cells of L4 larvae. Also expressed in attachment points of the cuticle at the anterior end of larvae, in the arcade cells in the mouth, the anterior pharynx, the amphid socket cells, and in the rectal epithelial cells at the posterior end of the larvae (at protein level).

Its subcellular location is the secreted. Metalloprotease. Plays an essential role in molting, a process during larval stages in which a new cuticle is formed and the old cuticle is shed. Required during ecdysis, the opening of the cuticle to allow the worm to escape. The protein is Zinc metalloproteinase nas-37 (nas-37) of Caenorhabditis elegans.